Consider the following 149-residue polypeptide: Large ribosomal subunit protein uL13 (149 aa).

Belongs to the universal ribosomal protein uL13 family. As to quaternary structure, part of the 50S ribosomal subunit.

Its function is as follows. This protein is one of the early assembly proteins of the 50S ribosomal subunit, although it is not seen to bind rRNA by itself. It is important during the early stages of 50S assembly. This Thermobifida fusca (strain YX) protein is Large ribosomal subunit protein uL13.